The primary structure comprises 338 residues: Holliday junction branch migration complex subunit RuvB (338 aa).

Positions 4–184 (ADRLMSAAAV…FGIVQRLEFY (181 aa)) are large ATPase domain (RuvB-L). Residues I23, R24, G65, K68, T69, T70, 131–133 (EDY), R174, Y184, and R221 contribute to the ATP site. A Mg(2+)-binding site is contributed by T69. Positions 185-255 (QTGDLQHIVS…VAVSALNMLN (71 aa)) are small ATPAse domain (RuvB-S). The head domain (RuvB-H) stretch occupies residues 258–338 (TEGFDFMDRK…GLEEHGGDPE (81 aa)). DNA contacts are provided by R294, R313, and R318.

It belongs to the RuvB family. Homohexamer. Forms an RuvA(8)-RuvB(12)-Holliday junction (HJ) complex. HJ DNA is sandwiched between 2 RuvA tetramers; dsDNA enters through RuvA and exits via RuvB. An RuvB hexamer assembles on each DNA strand where it exits the tetramer. Each RuvB hexamer is contacted by two RuvA subunits (via domain III) on 2 adjacent RuvB subunits; this complex drives branch migration. In the full resolvosome a probable DNA-RuvA(4)-RuvB(12)-RuvC(2) complex forms which resolves the HJ.

It localises to the cytoplasm. It catalyses the reaction ATP + H2O = ADP + phosphate + H(+). In terms of biological role, the RuvA-RuvB-RuvC complex processes Holliday junction (HJ) DNA during genetic recombination and DNA repair, while the RuvA-RuvB complex plays an important role in the rescue of blocked DNA replication forks via replication fork reversal (RFR). RuvA specifically binds to HJ cruciform DNA, conferring on it an open structure. The RuvB hexamer acts as an ATP-dependent pump, pulling dsDNA into and through the RuvAB complex. RuvB forms 2 homohexamers on either side of HJ DNA bound by 1 or 2 RuvA tetramers; 4 subunits per hexamer contact DNA at a time. Coordinated motions by a converter formed by DNA-disengaged RuvB subunits stimulates ATP hydrolysis and nucleotide exchange. Immobilization of the converter enables RuvB to convert the ATP-contained energy into a lever motion, pulling 2 nucleotides of DNA out of the RuvA tetramer per ATP hydrolyzed, thus driving DNA branch migration. The RuvB motors rotate together with the DNA substrate, which together with the progressing nucleotide cycle form the mechanistic basis for DNA recombination by continuous HJ branch migration. Branch migration allows RuvC to scan DNA until it finds its consensus sequence, where it cleaves and resolves cruciform DNA. The sequence is that of Holliday junction branch migration complex subunit RuvB from Sodalis glossinidius (strain morsitans).